Consider the following 215-residue polypeptide: Cytochrome b6 (215 aa).

Residues 32-52 (IFYCLGGVTLICFLVQFATGF) form a helical membrane-spanning segment. C35 lines the heme c pocket. Residues H86 and H100 each coordinate heme b. 3 consecutive transmembrane segments (helical) span residues 90–110 (ASMM…TGGF), 116–136 (LTWV…VTGY), and 186–206 (AHTF…FLMI). Positions 187 and 202 each coordinate heme b.

Belongs to the cytochrome b family. PetB subfamily. As to quaternary structure, the 4 large subunits of the cytochrome b6-f complex are cytochrome b6, subunit IV (17 kDa polypeptide, PetD), cytochrome f and the Rieske protein, while the 4 small subunits are PetG, PetL, PetM and PetN. The complex functions as a dimer. Requires heme b as cofactor. Heme c serves as cofactor.

Its subcellular location is the cell inner membrane. Component of the cytochrome b6-f complex, which mediates electron transfer between photosystem II (PSII) and photosystem I (PSI), cyclic electron flow around PSI, and state transitions. In Gloeobacter violaceus (strain ATCC 29082 / PCC 7421), this protein is Cytochrome b6.